The sequence spans 591 residues: Alternative cytochrome c oxidase subunit 1 (591 aa).

The chain crosses the membrane as a helical span at residues valine 40–serine 60. Residue histidine 88 coordinates heme b. 11 helical membrane passes run methionine 90–isoleucine 110, methionine 126–proline 146, glycine 172–leucine 192, valine 215–glycine 235, leucine 274–valine 294, valine 313–valine 333, tyrosine 337–isoleucine 357, methionine 377–leucine 397, valine 412–isoleucine 432, phenylalanine 453–leucine 473, and phenylalanine 498–valine 518. Positions 280, 284, 329, and 330 each coordinate Cu cation. A cross-link (1'-histidyl-3'-tyrosine (His-Tyr)) is located at residues histidine 280–tyrosine 284. Heme b is bound by residues histidine 415 and histidine 417.

Belongs to the heme-copper respiratory oxidase family. As to quaternary structure, this alternate cytochrome c oxidase consists of a subunit I and two cytochromes c. Equivalents to subunit 2 and 3 are not present in this complex.

The protein localises to the cell membrane. It catalyses the reaction 4 Fe(II)-[cytochrome c] + O2 + 8 H(+)(in) = 4 Fe(III)-[cytochrome c] + 2 H2O + 4 H(+)(out). In terms of biological role, cytochrome c oxidase is the component of the respiratory chain that catalyzes the reduction of oxygen to water. Subunits 1-3 form the functional core of the enzyme complex. Co I is the catalytic subunit of the enzyme. Electrons originating in cytochrome c are transferred via the copper A center of subunit 2 and a low-spin heme of subunit 1 to the bimetallic center formed by a high-spin heme and copper B. The protein is Alternative cytochrome c oxidase subunit 1 (coxN) of Bradyrhizobium diazoefficiens (strain JCM 10833 / BCRC 13528 / IAM 13628 / NBRC 14792 / USDA 110).